Reading from the N-terminus, the 481-residue chain is MKKRMWRISLISQISDLLCLSRGSSSTLKTLTPFCFTLSRSPFHQSGGDDDASGLKNQLLRFRNDSGKVASVLERNKIQGAAFVELLRQLRPWPVLSQLVFDWRRNKALCDGLPMTADEYAKGITISGRLKNVDLALSLFHESANKTTSVYNALMGAYLCNGLSHHCEQLFLDFNSQQDGPSSSTPSVSTYNILISLYGRLIMVERMESVFLQLQQLNILPDSSTYNNLIAGYIYAWDWDKMEATFHSMKNGLVKPTLATYLLMLRGYANSGNLLRMEDMYQAVKRHVDRNEIKLIESMICAYYRSCHKDRIRKIKTLSKLIPKKSYKPWLYLLLMQVYAKDDNLHAMENFIDQAITKGLQIETDGIMRSIVASYFRCNAVDKLAKFVQRANSAGWKMSRSMFHGLMIMYGSQKRFKEMENVLSEMESFKISRSKKTLCILLRVYAATHGQEHKVNQVAGMMLKHGHDFQRPEASKRVMGK.

PPR repeat units lie at residues 147-181, 187-221, 222-256, 257-287, 292-324, 328-362, 364-398, 399-433, and 434-469; these read TTSVYNALMGAYLCNGLSHHCEQLFLDFNSQQDGP, SVSTYNILISLYGRLIMVERMESVFLQLQQLNILP, DSSTYNNLIAGYIYAWDWDKMEATFHSMKNGLVKP, TLATYLLMLRGYANSGNLLRMEDMYQAVKRH, EIKLIESMICAYYRSCHKDRIRKIKTLSKLIPK, KPWLYLLLMQVYAKDDNLHAMENFIDQAITKGLQI, TDGIMRSIVASYFRCNAVDKLAKFVQRANSAGWKM, SRSMFHGLMIMYGSQKRFKEMENVLSEMESFKISR, and SKKTLCILLRVYAATHGQEHKVNQVAGMMLKHGHDF.

The protein belongs to the PPR family. P subfamily.

The sequence is that of Pentatricopeptide repeat-containing protein At2g48000 from Arabidopsis thaliana (Mouse-ear cress).